We begin with the raw amino-acid sequence, 410 residues long: Chitin deacetylase 3 (410 aa).

The first 18 residues, 1–18 (MYGHLSLSTLSLLAVVAA), serve as a signal peptide directing secretion. A propeptide spanning residues 19–39 (APFPESWLQPRDSDVSQLFRR) is cleaved from the precursor. Residues Asn-61 and Asn-80 are each glycosylated (N-linked (GlcNAc...) asparagine). In terms of domain architecture, NodB homology spans 124–314 (KVWALSFDDG…KAVANGWSVK (191 aa)). The active-site Proton acceptor is the Asp-131. Asp-131 contributes to the acetate binding site. Position 132 (Asp-132) interacts with Co(2+). Asn-149 carries an N-linked (GlcNAc...) asparagine glycan. His-183 and His-187 together coordinate Co(2+). Tyr-225 is an acetate binding site. Asn-279 carries an N-linked (GlcNAc...) asparagine glycan. Residue His-289 is the Proton donor of the active site. An N-linked (GlcNAc...) asparagine glycan is attached at Asn-293. The GPI-anchor amidated serine moiety is linked to residue Ser-385. Positions 386–410 (SSWPIANRPSLFVIACGLALAAIMV) are cleaved as a propeptide — removed in mature form.

This sequence belongs to the polysaccharide deacetylase family. Co(2+) is required as a cofactor.

It localises to the cell membrane. It catalyses the reaction [(1-&gt;4)-N-acetyl-beta-D-glucosaminyl](n) + n H2O = chitosan + n acetate. Hydrolyzes the N-acetamido groups of N-acetyl-D-glucosamine residues in chitin to form chitosan and acetate. Chitosan is required to anchor melanin to the cell wall, for maintenance of cell wall integrity, and for proper cytokinesis. Chitosan offers an advantage during infection as it is less readily detected than chitin by host immunosurveillance mechanisms. The sequence is that of Chitin deacetylase 3 from Cryptococcus neoformans var. neoformans serotype D (strain JEC21 / ATCC MYA-565) (Filobasidiella neoformans).